A 292-amino-acid chain; its full sequence is NAD kinase (292 aa).

D74 (proton acceptor) is an active-site residue. NAD(+) is bound by residues 74-75 (DG), 147-148 (NE), D177, and 188-193 (TGYSLS).

This sequence belongs to the NAD kinase family. The cofactor is a divalent metal cation.

The protein resides in the cytoplasm. It carries out the reaction NAD(+) + ATP = ADP + NADP(+) + H(+). Involved in the regulation of the intracellular balance of NAD and NADP, and is a key enzyme in the biosynthesis of NADP. Catalyzes specifically the phosphorylation on 2'-hydroxyl of the adenosine moiety of NAD to yield NADP. In Cytophaga hutchinsonii (strain ATCC 33406 / DSM 1761 / CIP 103989 / NBRC 15051 / NCIMB 9469 / D465), this protein is NAD kinase.